We begin with the raw amino-acid sequence, 254 residues long: Undecaprenyl-diphosphatase 3 (254 aa).

8 consecutive transmembrane segments (helical) span residues 8–28, 33–53, 74–94, 97–117, 133–153, 174–194, 207–227, and 233–253; these read TEFL…LIGF, AKVF…VIFW, LHII…HSAI, VLFG…LMIV, ITYK…WPGF, AEYT…LDLI, LFAT…VSFL, and VKLT…YFFI.

Belongs to the UppP family.

It is found in the cell membrane. The catalysed reaction is di-trans,octa-cis-undecaprenyl diphosphate + H2O = di-trans,octa-cis-undecaprenyl phosphate + phosphate + H(+). Functionally, catalyzes the dephosphorylation of undecaprenyl diphosphate (UPP). Confers resistance to bacitracin. This chain is Undecaprenyl-diphosphatase 3, found in Bacillus thuringiensis (strain Al Hakam).